The primary structure comprises 287 residues: Aspartate dehydrogenase domain-containing protein (287 aa).

Ser24 and Ser172 each carry phosphoserine.

Belongs to the L-aspartate dehydrogenase family.

The protein is Aspartate dehydrogenase domain-containing protein of Mus musculus (Mouse).